A 164-amino-acid chain; its full sequence is Phosphopantetheine adenylyltransferase (164 aa).

Residue S9 coordinates substrate. ATP-binding positions include 9–10 (SF) and H17. Residues K41, T74, and R88 each coordinate substrate. ATP-binding positions include 89–91 (GVR), E99, and 124–130 (NSFVASS).

The protein belongs to the bacterial CoaD family. As to quaternary structure, homohexamer. Requires Mg(2+) as cofactor.

It localises to the cytoplasm. The catalysed reaction is (R)-4'-phosphopantetheine + ATP + H(+) = 3'-dephospho-CoA + diphosphate. The protein operates within cofactor biosynthesis; coenzyme A biosynthesis; CoA from (R)-pantothenate: step 4/5. Functionally, reversibly transfers an adenylyl group from ATP to 4'-phosphopantetheine, yielding dephospho-CoA (dPCoA) and pyrophosphate. In Lactobacillus helveticus (strain DPC 4571), this protein is Phosphopantetheine adenylyltransferase.